Here is a 520-residue protein sequence, read N- to C-terminus: Ribonuclease Y (520 aa).

The helical transmembrane segment at 5 to 25 (ITIISSLLFLIVGLVVGSLIF) threads the bilayer. The tract at residues 70–127 (RTEIENELRGRRTETQKAENRLLQREENLDRKDTSLSKREATLERKEESISKRQQQIE) is disordered. The KH domain maps to 210-273 (TVSVVTLPND…EIARIALEKL (64 aa)). Positions 336 to 429 (VLNHSLEVSK…VAAADALSAA (94 aa)) constitute an HD domain.

This sequence belongs to the RNase Y family.

Its subcellular location is the cell membrane. Endoribonuclease that initiates mRNA decay. In Listeria welshimeri serovar 6b (strain ATCC 35897 / DSM 20650 / CCUG 15529 / CIP 8149 / NCTC 11857 / SLCC 5334 / V8), this protein is Ribonuclease Y.